The primary structure comprises 359 residues: Membrane-bound lytic murein transglycosylase C (359 aa).

Residues 1 to 16 (MKKYLALALIAPLLIS) form the signal peptide. Cysteine 17 is lipidated: N-palmitoyl cysteine. Cysteine 17 carries S-diacylglycerol cysteine lipidation.

Belongs to the transglycosylase Slt family.

It localises to the cell outer membrane. It catalyses the reaction Exolytic cleavage of the (1-&gt;4)-beta-glycosidic linkage between N-acetylmuramic acid (MurNAc) and N-acetylglucosamine (GlcNAc) residues in peptidoglycan, from either the reducing or the non-reducing ends of the peptidoglycan chains, with concomitant formation of a 1,6-anhydrobond in the MurNAc residue.. Its function is as follows. Murein-degrading enzyme. May play a role in recycling of muropeptides during cell elongation and/or cell division. In Escherichia coli (strain SE11), this protein is Membrane-bound lytic murein transglycosylase C.